Reading from the N-terminus, the 399-residue chain is Acetate kinase (399 aa).

Asn7 lines the Mg(2+) pocket. Lys14 contacts ATP. Position 90 (Arg90) interacts with substrate. The Proton donor/acceptor role is filled by Asp147. ATP-binding positions include 207–211 (HLGNG), 282–284 (DFR), and 330–334 (GIGEN). Glu385 provides a ligand contact to Mg(2+).

Belongs to the acetokinase family. Homodimer. Mg(2+) serves as cofactor. The cofactor is Mn(2+).

It localises to the cytoplasm. It carries out the reaction acetate + ATP = acetyl phosphate + ADP. The protein operates within metabolic intermediate biosynthesis; acetyl-CoA biosynthesis; acetyl-CoA from acetate: step 1/2. Its function is as follows. Catalyzes the formation of acetyl phosphate from acetate and ATP. Can also catalyze the reverse reaction. The polypeptide is Acetate kinase (Caldicellulosiruptor saccharolyticus (strain ATCC 43494 / DSM 8903 / Tp8T 6331)).